We begin with the raw amino-acid sequence, 245 residues long: 1-(5-phosphoribosyl)-5-[(5-phosphoribosylamino)methylideneamino] imidazole-4-carboxamide isomerase (245 aa).

The active-site Proton acceptor is the aspartate 8. The Proton donor role is filled by aspartate 130.

The protein belongs to the HisA/HisF family.

It is found in the cytoplasm. The catalysed reaction is 1-(5-phospho-beta-D-ribosyl)-5-[(5-phospho-beta-D-ribosylamino)methylideneamino]imidazole-4-carboxamide = 5-[(5-phospho-1-deoxy-D-ribulos-1-ylimino)methylamino]-1-(5-phospho-beta-D-ribosyl)imidazole-4-carboxamide. It participates in amino-acid biosynthesis; L-histidine biosynthesis; L-histidine from 5-phospho-alpha-D-ribose 1-diphosphate: step 4/9. This Pseudomonas aeruginosa (strain LESB58) protein is 1-(5-phosphoribosyl)-5-[(5-phosphoribosylamino)methylideneamino] imidazole-4-carboxamide isomerase.